The following is a 421-amino-acid chain: Synaptotagmin-1 (421 aa).

Residues 1 to 40 (MVSESHHEALAAPPATTVAAAPPSNVTEPASPGGGGGKED) form a disordered region. Over 1–60 (MVSESHHEALAAPPATTVAAAPPSNVTEPASPGGGGGKEDAFSKLKEKFMNELNKIPLPP) the chain is Vesicular. Residues 10–23 (LAAPPATTVAAAPP) show a composition bias toward low complexity. The N-linked (GlcNAc...) asparagine glycan is linked to Asn25. The helical transmembrane segment at 61-81 (WALIAIAIVAVLLILTCCFCL) threads the bilayer. Residues Cys77, Cys78, Cys80, Cys82, and Cys85 are each lipidated (S-palmitoyl cysteine). Residues 82–421 (CKKCLFKKKN…EVDAMLAVKK (340 aa)) are Cytoplasmic-facing. The disordered stretch occupies residues 94–139 (KGKEKGGKNAINMKDVKDLGKTMKDQDDDAETGLTDGEEKEEPKEV). Over residues 107–118 (KDVKDLGKTMKD) the composition is skewed to basic and acidic residues. Residues 119 to 133 (QDDDAETGLTDGEEK) are compositionally biased toward acidic residues. Residues 135–381 (EPKEVEKLGK…AIGKVFVGYN (247 aa)) are phospholipid binding. C2 domains are found at residues 141–260 (KLGK…EEWR) and 272–405 (KLGD…AQWH). Leu171, Asp172, Asp178, Asp230, Phe231, Asp232, Ser235, Lys236, Asp238, Asp303, Asp309, Asp363, Asp365, and Asp371 together coordinate Ca(2+).

Belongs to the synaptotagmin family. Homotetramer. Ca(2+) serves as cofactor.

The protein resides in the cytoplasmic vesicle. The protein localises to the secretory vesicle membrane. It is found in the secretory vesicle. It localises to the synaptic vesicle membrane. Its subcellular location is the chromaffin granule membrane. The protein resides in the cytoplasm. Functionally, calcium sensor that participates in triggering neurotransmitter release at the synapse. May have a regulatory role in the membrane interactions during trafficking of synaptic vesicles at the active zone of the synapse. It binds acidic phospholipids with a specificity that requires the presence of both an acidic head group and a diacyl backbone. May play a role in dendrite formation by melanocytes. May play a role in regulating the secretion of hormones relevant to the reproduction and egg-laying of female geese. The polypeptide is Synaptotagmin-1 (Anser cygnoides (Swan goose)).